We begin with the raw amino-acid sequence, 109 residues long: MSISFRTNTSMMNIAYKNRDLSDEEFKEEAHQFRDKEIKILEEKLKELNISCKVVGINSIKDMNEYKEIMENVNQAKEELKRIDELIAVRSSRIDFLEDKTLRITGNQR.

Positions 27–89 (KEEAHQFRDK…LKRIDELIAV (63 aa)) form a coiled coil.

This is an uncharacterized protein from Streptococcus pneumoniae.